Reading from the N-terminus, the 31-residue chain is Cytochrome b6-f complex subunit 6 (31 aa).

A helical membrane pass occupies residues 3 to 23 (LIIGYIILLACAFGLAAGLYF).

This sequence belongs to the PetL family. In terms of assembly, the 4 large subunits of the cytochrome b6-f complex are cytochrome b6, subunit IV (17 kDa polypeptide, PetD), cytochrome f and the Rieske protein, while the 4 small subunits are PetG, PetL, PetM and PetN. The complex functions as a dimer.

The protein localises to the plastid. The protein resides in the chloroplast thylakoid membrane. Its function is as follows. Component of the cytochrome b6-f complex, which mediates electron transfer between photosystem II (PSII) and photosystem I (PSI), cyclic electron flow around PSI, and state transitions. PetL is important for photoautotrophic growth as well as for electron transfer efficiency and stability of the cytochrome b6-f complex. The protein is Cytochrome b6-f complex subunit 6 of Guillardia theta (Cryptophyte).